A 142-amino-acid polypeptide reads, in one-letter code: Putative pre-16S rRNA nuclease (142 aa).

This sequence belongs to the YqgF nuclease family.

It localises to the cytoplasm. In terms of biological role, could be a nuclease involved in processing of the 5'-end of pre-16S rRNA. The chain is Putative pre-16S rRNA nuclease from Photobacterium profundum (strain SS9).